The sequence spans 556 residues: Cytochrome P450 4g1 (556 aa).

Positions 356 and 497 each coordinate heme.

This sequence belongs to the cytochrome P450 family. The cofactor is heme.

It localises to the endoplasmic reticulum membrane. The protein resides in the microsome membrane. In terms of biological role, may be involved in the metabolism of insect hormones and in the breakdown of synthetic insecticides. In Drosophila melanogaster (Fruit fly), this protein is Cytochrome P450 4g1 (Cyp4g1).